Here is a 365-residue protein sequence, read N- to C-terminus: Phosphoserine aminotransferase (365 aa).

Arg-42 contacts L-glutamate. Residues 76 to 77 (GR), Trp-102, Thr-156, Asp-175, and Gln-198 contribute to the pyridoxal 5'-phosphate site. Lys-199 carries the post-translational modification N6-(pyridoxal phosphate)lysine. 240–241 (NT) contributes to the pyridoxal 5'-phosphate binding site.

This sequence belongs to the class-V pyridoxal-phosphate-dependent aminotransferase family. SerC subfamily. As to quaternary structure, homodimer. It depends on pyridoxal 5'-phosphate as a cofactor.

The protein resides in the cytoplasm. It carries out the reaction O-phospho-L-serine + 2-oxoglutarate = 3-phosphooxypyruvate + L-glutamate. The catalysed reaction is 4-(phosphooxy)-L-threonine + 2-oxoglutarate = (R)-3-hydroxy-2-oxo-4-phosphooxybutanoate + L-glutamate. The protein operates within amino-acid biosynthesis; L-serine biosynthesis; L-serine from 3-phospho-D-glycerate: step 2/3. Its pathway is cofactor biosynthesis; pyridoxine 5'-phosphate biosynthesis; pyridoxine 5'-phosphate from D-erythrose 4-phosphate: step 3/5. Functionally, catalyzes the reversible conversion of 3-phosphohydroxypyruvate to phosphoserine and of 3-hydroxy-2-oxo-4-phosphonooxybutanoate to phosphohydroxythreonine. The sequence is that of Phosphoserine aminotransferase from Shewanella oneidensis (strain ATCC 700550 / JCM 31522 / CIP 106686 / LMG 19005 / NCIMB 14063 / MR-1).